Reading from the N-terminus, the 280-residue chain is Shikimate dehydrogenase (NADP(+)) (280 aa).

Shikimate is bound by residues 18–20 and Thr-65; that span reads SRS. The active-site Proton acceptor is Lys-69. Residues Asn-90 and Asp-105 each coordinate shikimate. Residues 130–134, 154–159, and Leu-219 each bind NADP(+); these read GAGGA and NRTLAR. Tyr-221 contributes to the shikimate binding site. Gly-242 is an NADP(+) binding site.

Belongs to the shikimate dehydrogenase family. Homodimer.

It catalyses the reaction shikimate + NADP(+) = 3-dehydroshikimate + NADPH + H(+). The protein operates within metabolic intermediate biosynthesis; chorismate biosynthesis; chorismate from D-erythrose 4-phosphate and phosphoenolpyruvate: step 4/7. In terms of biological role, involved in the biosynthesis of the chorismate, which leads to the biosynthesis of aromatic amino acids. Catalyzes the reversible NADPH linked reduction of 3-dehydroshikimate (DHSA) to yield shikimate (SA). The polypeptide is Shikimate dehydrogenase (NADP(+)) (Mesorhizobium japonicum (strain LMG 29417 / CECT 9101 / MAFF 303099) (Mesorhizobium loti (strain MAFF 303099))).